The chain runs to 428 residues: Flotillin-2a (428 aa).

S-palmitoyl cysteine attachment occurs at residues Cys4, Cys19, and Cys20.

The protein belongs to the band 7/mec-2 family. Flotillin subfamily. As to quaternary structure, heterooligomer; Heterooligomerizes with ic complex of flotillins 1 and 2. In terms of processing, palmitoylation may be required for the formation of higher order complexes and for neurite outgrowth in cultured neural stem cells.

It is found in the membrane. The protein resides in the endosome. May play a role in axon growth and regeneration. May be involved in epidermal cell adhesion and epidermal structure and function. This is Flotillin-2a (flot2a) from Danio rerio (Zebrafish).